Consider the following 124-residue polypeptide: Ragulator complex protein LAMTOR3 (124 aa).

Residues T57–S70 form a required for interaction with LAMTOR2 region.

This sequence belongs to the LAMTOR3 family. Part of the Ragulator complex composed of LAMTOR1, LAMTOR2, LAMTOR3, LAMTOR4 and LAMTOR5. LAMTOR4 and LAMTOR5 form a heterodimer that interacts, through LAMTOR1, with a LAMTOR2, LAMTOR3 heterodimer. The Ragulator complex interacts with both the mTORC1 complex and heterodimers constituted of the Rag GTPases RagA/RRAGA, RagB/RRAGB, RagC/RRAGC and RagD/RRAGD; regulated by amino acid availability. The Ragulator complex interacts with SLC38A9; the probable amino acid sensor. Interacts with LAMTOR1 and LAMTOR2; the interaction is direct. Component of the lysosomal folliculin complex (LFC), composed of FLCN, FNIP1 (or FNIP2), RagA/RRAGA or RagB/RRAGB GDP-bound, RagC/RRAGC or RagD/RRAGD GTP-bound, and Ragulator. Interacts with MAP2K1/MEK1 and MAPK2. Interacts with MORG1.

The protein localises to the late endosome membrane. In terms of biological role, as part of the Ragulator complex it is involved in amino acid sensing and activation of mTORC1, a signaling complex promoting cell growth in response to growth factors, energy levels, and amino acids. Activated by amino acids through a mechanism involving the lysosomal V-ATPase, the Ragulator plays a dual role for the small GTPases Rag (RagA/RRAGA, RagB/RRAGB, RagC/RRAGC and/or RagD/RRAGD): it (1) acts as a guanine nucleotide exchange factor (GEF), activating the small GTPases Rag and (2) mediates recruitment of Rag GTPases to the lysosome membrane. Activated Ragulator and Rag GTPases function as a scaffold recruiting mTORC1 to lysosomes where it is in turn activated. Adapter protein that enhances the efficiency of the MAP kinase cascade facilitating the activation of MAPK2. This chain is Ragulator complex protein LAMTOR3 (Lamtor3), found in Mus musculus (Mouse).